The sequence spans 193 residues: Imidazoleglycerol-phosphate dehydratase (193 aa).

This sequence belongs to the imidazoleglycerol-phosphate dehydratase family.

Its subcellular location is the cytoplasm. The enzyme catalyses D-erythro-1-(imidazol-4-yl)glycerol 3-phosphate = 3-(imidazol-4-yl)-2-oxopropyl phosphate + H2O. Its pathway is amino-acid biosynthesis; L-histidine biosynthesis; L-histidine from 5-phospho-alpha-D-ribose 1-diphosphate: step 6/9. The polypeptide is Imidazoleglycerol-phosphate dehydratase (Saccharolobus islandicus (strain Y.G.57.14 / Yellowstone #1) (Sulfolobus islandicus)).